Consider the following 362-residue polypeptide: UDP-N-acetylglucosamine--N-acetylmuramyl-(pentapeptide) pyrophosphoryl-undecaprenol N-acetylglucosamine transferase (362 aa).

UDP-N-acetyl-alpha-D-glucosamine-binding positions include 15-17, asparagine 127, arginine 165, serine 191, isoleucine 247, 266-271, and glutamine 292; these read TGG and ALTVSE.

The protein belongs to the glycosyltransferase 28 family. MurG subfamily.

Its subcellular location is the cell inner membrane. The catalysed reaction is di-trans,octa-cis-undecaprenyl diphospho-N-acetyl-alpha-D-muramoyl-L-alanyl-D-glutamyl-meso-2,6-diaminopimeloyl-D-alanyl-D-alanine + UDP-N-acetyl-alpha-D-glucosamine = di-trans,octa-cis-undecaprenyl diphospho-[N-acetyl-alpha-D-glucosaminyl-(1-&gt;4)]-N-acetyl-alpha-D-muramoyl-L-alanyl-D-glutamyl-meso-2,6-diaminopimeloyl-D-alanyl-D-alanine + UDP + H(+). It functions in the pathway cell wall biogenesis; peptidoglycan biosynthesis. Functionally, cell wall formation. Catalyzes the transfer of a GlcNAc subunit on undecaprenyl-pyrophosphoryl-MurNAc-pentapeptide (lipid intermediate I) to form undecaprenyl-pyrophosphoryl-MurNAc-(pentapeptide)GlcNAc (lipid intermediate II). This Shewanella baltica (strain OS223) protein is UDP-N-acetylglucosamine--N-acetylmuramyl-(pentapeptide) pyrophosphoryl-undecaprenol N-acetylglucosamine transferase.